The following is a 148-amino-acid chain: Lysozyme C, milk isozyme (148 aa).

The signal sequence occupies residues 1–18 (MKALLIVGLLLLSVAVQG). Positions 19-148 (KKFQRCELAR…LRSYVQGCRV (130 aa)) constitute a C-type lysozyme domain. 4 cysteine pairs are disulfide-bonded: C24/C146, C48/C134, C83/C99, and C95/C113. Residues E53 and D71 contribute to the active site.

The protein belongs to the glycosyl hydrolase 22 family.

The enzyme catalyses Hydrolysis of (1-&gt;4)-beta-linkages between N-acetylmuramic acid and N-acetyl-D-glucosamine residues in a peptidoglycan and between N-acetyl-D-glucosamine residues in chitodextrins.. Its function is as follows. Lysozymes have primarily a bacteriolytic function; those in tissues and body fluids are associated with the monocyte-macrophage system and enhance the activity of immunoagents. The chain is Lysozyme C, milk isozyme from Bos taurus (Bovine).